Consider the following 476-residue polypeptide: 3-isopropylmalate dehydratase large subunit (476 aa).

3 residues coordinate [4Fe-4S] cluster: cysteine 353, cysteine 413, and cysteine 416.

This sequence belongs to the aconitase/IPM isomerase family. LeuC type 1 subfamily. In terms of assembly, heterodimer of LeuC and LeuD. It depends on [4Fe-4S] cluster as a cofactor.

It carries out the reaction (2R,3S)-3-isopropylmalate = (2S)-2-isopropylmalate. Its pathway is amino-acid biosynthesis; L-leucine biosynthesis; L-leucine from 3-methyl-2-oxobutanoate: step 2/4. In terms of biological role, catalyzes the isomerization between 2-isopropylmalate and 3-isopropylmalate, via the formation of 2-isopropylmaleate. This Yersinia enterocolitica serotype O:8 / biotype 1B (strain NCTC 13174 / 8081) protein is 3-isopropylmalate dehydratase large subunit.